The sequence spans 122 residues: Antitoxin protein TsiV3 (122 aa).

The first 24 residues, 1–24 (MNNLLSAYVTMLLILLSISGGAIA), serve as a signal peptide directing secretion. 2 disulfide bridges follow: Cys-28/Cys-41 and Cys-82/Cys-100.

As to quaternary structure, homodimer; dimerization is critical for inhibitory activity. Forms a heterotetramer with VgrG3 composed of one TsiV3 homodimer and two VgrG3 molecules.

Its function is as follows. Immunity protein that plays a role in preventing early activation of toxin VgrG3. The polypeptide is Antitoxin protein TsiV3 (Vibrio cholerae serotype O1 (strain ATCC 39315 / El Tor Inaba N16961)).